The sequence spans 343 residues: Putative adenosine/adenine deaminase (343 aa).

Zn(2+)-binding residues include His-16, His-18, and His-204. His-18 contributes to the substrate binding site. Glu-207 acts as the Proton donor in catalysis. Residue Asp-285 coordinates Zn(2+). Residue Asp-286 coordinates substrate.

It belongs to the metallo-dependent hydrolases superfamily. Adenosine and AMP deaminases family. Zn(2+) is required as a cofactor.

In terms of biological role, putative nucleoside deaminase. May catalyze the hydrolytic deamination of adenosine or some similar substrate and play a role in purine metabolism. This is Putative adenosine/adenine deaminase from Streptomyces coelicolor (strain ATCC BAA-471 / A3(2) / M145).